Reading from the N-terminus, the 160-residue chain is MKFLVLALCIAAAVAAPLSADEASLVRGSWAQVKHSEVDILYYIFKANPDIMAKFPQFAGKDLETLKGTGQFATHAGRIVGFVSEIVALMGNSANMPAMETLIKDMAANHKARGIPKAQFNEFRASLVSYLQSKVSWNDSLGAAWTQGLDNVFNMMFSYL.

The N-terminal stretch at 1–15 is a signal peptide; sequence MKFLVLALCIAAAVA. Residues 17-160 form the Globin domain; the sequence is PLSADEASLV…NVFNMMFSYL (144 aa). Heme b-binding residues include histidine 75 and histidine 110.

The protein belongs to the globin family. Homodimer.

This chain is Globin CTT-II beta, found in Chironomus thummi thummi (Midge).